Here is an 81-residue protein sequence, read N- to C-terminus: Antimicrobial peptide Con22 (81 aa).

Positions Met-1 to Ala-22 are cleaved as a signal peptide. Positions Glu-66–Ser-81 are excised as a propeptide.

Belongs to the non-disulfide-bridged peptide (NDBP) superfamily. Long chain multifunctional peptide (group 2) family. Expressed by the venom gland.

The protein localises to the secreted. It localises to the target cell membrane. Functionally, at high concentrations, acts as a pore former in cellular membranes and causes the leakage of the cells. At submicromolar concentrations, degranulates granulocytes and has a weak hemolytic activity against human erythrocytes. Also strongly inhibits the production of superoxide anions. Has a strong antibacterial activity against Gram-negative bacteria but is less active against Gram-positive bacteria. Also has antifungal activity. This Urodacus yaschenkoi (Inland robust scorpion) protein is Antimicrobial peptide Con22.